The following is a 37-amino-acid chain: Large ribosomal subunit protein bL36 (37 aa).

The protein belongs to the bacterial ribosomal protein bL36 family.

The chain is Large ribosomal subunit protein bL36 from Metamycoplasma arthritidis (strain 158L3-1) (Mycoplasma arthritidis).